A 250-amino-acid polypeptide reads, in one-letter code: MKNNQSKIKLVIDVGNSYLKIGVFHDLELIELKKFKTKYFKISYFENFYKKVFAKYKFNLFIVFGSVVPSIEQKFLDFVKENNLENNFFLINNYLKLSFKVPQEKLGLIGNDLLGAMEYASKETSNALIFLFGTASVALLLEKLNFSGAIIAPGMNFSFNNLLSKAKKLKGFKLHKENVSLWNLNTQDALESGYENLKNGFIKQIICKSNSNYPVYISGGDISNLSPEISHQFVDNIVLKGYLLIYLKNC.

Residue 13–20 (DVGNSYLK) participates in ATP binding. A substrate-binding site is contributed by 110 to 113 (GNDL). Aspartate 112 (proton acceptor) is an active-site residue. Threonine 134 provides a ligand contact to ATP. Threonine 186 contacts substrate.

The protein belongs to the type III pantothenate kinase family. Homodimer. NH4(+) is required as a cofactor. It depends on K(+) as a cofactor.

It localises to the cytoplasm. The catalysed reaction is (R)-pantothenate + ATP = (R)-4'-phosphopantothenate + ADP + H(+). The protein operates within cofactor biosynthesis; coenzyme A biosynthesis; CoA from (R)-pantothenate: step 1/5. Its function is as follows. Catalyzes the phosphorylation of pantothenate (Pan), the first step in CoA biosynthesis. In Mycoplasmopsis synoviae (strain 53) (Mycoplasma synoviae), this protein is Type III pantothenate kinase.